The primary structure comprises 566 residues: Chromatin assembly factor 1 subunit B (566 aa).

6 WD repeats span residues 11–54 (HNKE…DGKA), 64–103 (RHTKAVNVVRFSPSGEVLASGGDDAVILLWKLNDSKELEP), 127–166 (GHLEDVYDICWTSDGNYMASASVDNTAIMWDVVKGQKVSI), 169–208 (EHKSYVQGITWDPLGQYIATLSCDRVLRVYNTQTKRVAFN), 228–279 (FHDD…RPMG), and 351–392 (IHYH…IPLK). Disordered regions lie at residues 411–481 (KSQP…NQPR) and 501–566 (IPLK…KPNK). Polar residues-rich tracts occupy residues 425-437 (TEGTSLSTPTLQP) and 469-478 (QPASQSTKVN).

It belongs to the WD repeat HIR1 family. In terms of assembly, interacts with CHAF1A.

Its subcellular location is the nucleus. In terms of biological role, acts as a component of the histone chaperone complex chromatin assembly factor 1 (CAF-1), which assembles histone octamers onto DNA during replication and repair. CAF-1 performs the first step of the nucleosome assembly process, bringing newly synthesized histones H3 and H4 to replicating DNA; histones H2A/H2B can bind to this chromatin precursor subsequent to DNA replication to complete the histone octamer. The sequence is that of Chromatin assembly factor 1 subunit B (CHAF1B) from Gallus gallus (Chicken).